The primary structure comprises 101 residues: Integration host factor subunit beta (101 aa).

The tract at residues 57-77 (PARAGRNPRTGAHVPVDQKSV) is disordered.

Belongs to the bacterial histone-like protein family. In terms of assembly, heterodimer of an alpha and a beta chain.

Functionally, this protein is one of the two subunits of integration host factor, a specific DNA-binding protein that functions in genetic recombination as well as in transcriptional and translational control. This Rhodopseudomonas palustris (strain HaA2) protein is Integration host factor subunit beta.